A 370-amino-acid polypeptide reads, in one-letter code: Histidinol-phosphate aminotransferase (370 aa).

Lysine 222 is modified (N6-(pyridoxal phosphate)lysine).

This sequence belongs to the class-II pyridoxal-phosphate-dependent aminotransferase family. Histidinol-phosphate aminotransferase subfamily. In terms of assembly, homodimer. The cofactor is pyridoxal 5'-phosphate.

The enzyme catalyses L-histidinol phosphate + 2-oxoglutarate = 3-(imidazol-4-yl)-2-oxopropyl phosphate + L-glutamate. It participates in amino-acid biosynthesis; L-histidine biosynthesis; L-histidine from 5-phospho-alpha-D-ribose 1-diphosphate: step 7/9. This is Histidinol-phosphate aminotransferase from Bacillus cytotoxicus (strain DSM 22905 / CIP 110041 / 391-98 / NVH 391-98).